A 755-amino-acid polypeptide reads, in one-letter code: Biodegradative arginine decarboxylase (755 aa).

At K386 the chain carries N6-(pyridoxal phosphate)lysine.

Belongs to the Orn/Lys/Arg decarboxylase class-I family. Homodecamer. The basic unit is a homodimer, organized into a ring of giving a pentamer of five homodimers. It depends on pyridoxal 5'-phosphate as a cofactor.

The protein resides in the cytoplasm. It catalyses the reaction L-arginine + H(+) = agmatine + CO2. Homodimers are probably inactive, their assembly into a homodecamer at low pH requires neutralization of negatively charged residues. This uses cytoplasmic protons, contributing pH regulation and stabilizes the homodecamer. Its function is as follows. Component of the acid-resistance (AR) system allowing enteric pathogens to survive the acidic environment in the stomach. ADC can be found in two forms: biodegradative (this enzyme) and biosynthetic (speA). The biodegradative form plays a role in regulating pH by consuming proteins. Converts arginine imported by AdiC to agmatine which is then exported by AdiC. In Escherichia coli (strain K12), this protein is Biodegradative arginine decarboxylase (adiA).